The chain runs to 570 residues: Sulfite reductase [NADPH] hemoprotein beta-component (570 aa).

4 residues coordinate [4Fe-4S] cluster: cysteine 434, cysteine 440, cysteine 479, and cysteine 483. Position 483 (cysteine 483) interacts with siroheme.

The protein belongs to the nitrite and sulfite reductase 4Fe-4S domain family. Alpha(8)-beta(8). The alpha component is a flavoprotein, the beta component is a hemoprotein. Siroheme serves as cofactor. [4Fe-4S] cluster is required as a cofactor.

The enzyme catalyses hydrogen sulfide + 3 NADP(+) + 3 H2O = sulfite + 3 NADPH + 4 H(+). Its pathway is sulfur metabolism; hydrogen sulfide biosynthesis; hydrogen sulfide from sulfite (NADPH route): step 1/1. In terms of biological role, component of the sulfite reductase complex that catalyzes the 6-electron reduction of sulfite to sulfide. This is one of several activities required for the biosynthesis of L-cysteine from sulfate. The chain is Sulfite reductase [NADPH] hemoprotein beta-component from Escherichia coli (strain B / BL21-DE3).